A 441-amino-acid chain; its full sequence is MTQTWNLLQTGQKEGYKIAYTNARIIDPETKLDIKGSLLTEGDKIVDFGESLFSTSGVDETIDCKGLVLMPGLIDIHVHFREPGQEHKETIYTGSKSAAAGGVTTVVCQPNTIPAIDSVVLAKYLKYRALETSHVNVEFYAKITTLEEKLTEMALLKEAGAVGFTDDGMPVMNPMIMRQALLYSSMLGVPIAQHAEDLNLSAGGAINEGKISEELGVKGILSASESVMVNRDILLMKDMENVHYHILHVSSKDSLDAIKRAKDLGLNVTCEVTPHHFTLTEDIVKQHGAIAKMNPPLRTEEDRLAMVEGLKTGVIDCIATDHAPHDRSSKDLPLENAAFGIVGLETMLPLSLELYHSGQMGLLDVLAKLTYKPADIIHIPRGRIQKNLAADLILVDLNHEWEIKTDNFASKSKNSPFDGRKVKGHVVRTVVSGKTIYSQKS.

Zn(2+)-binding residues include histidine 77 and histidine 79. Substrate is bound by residues 79–81 (HFR) and asparagine 111. Zn(2+)-binding residues include aspartate 167, histidine 194, and histidine 248. Asparagine 294 provides a ligand contact to substrate. Aspartate 321 contributes to the Zn(2+) binding site. Aspartate 321 is a catalytic residue. Substrate contacts are provided by residues histidine 325 and 339–340 (FG).

It belongs to the metallo-dependent hydrolases superfamily. DHOase family. Class I DHOase subfamily. Zn(2+) serves as cofactor.

It catalyses the reaction (S)-dihydroorotate + H2O = N-carbamoyl-L-aspartate + H(+). The protein operates within pyrimidine metabolism; UMP biosynthesis via de novo pathway; (S)-dihydroorotate from bicarbonate: step 3/3. In terms of biological role, catalyzes the reversible cyclization of carbamoyl aspartate to dihydroorotate. This Wolbachia sp. subsp. Drosophila simulans (strain wRi) protein is Dihydroorotase.